A 370-amino-acid chain; its full sequence is 3-dehydroquinate synthase (370 aa).

NAD(+) contacts are provided by residues 112–116 (GVVGD), 136–137 (TS), Lys149, Lys158, and 176–179 (TLRT). Glu191, His254, and His276 together coordinate Zn(2+).

Belongs to the sugar phosphate cyclases superfamily. Dehydroquinate synthase family. It depends on Co(2+) as a cofactor. Zn(2+) is required as a cofactor. The cofactor is NAD(+).

The protein localises to the cytoplasm. It carries out the reaction 7-phospho-2-dehydro-3-deoxy-D-arabino-heptonate = 3-dehydroquinate + phosphate. The protein operates within metabolic intermediate biosynthesis; chorismate biosynthesis; chorismate from D-erythrose 4-phosphate and phosphoenolpyruvate: step 2/7. Its function is as follows. Catalyzes the conversion of 3-deoxy-D-arabino-heptulosonate 7-phosphate (DAHP) to dehydroquinate (DHQ). This is 3-dehydroquinate synthase from Xanthomonas oryzae pv. oryzae (strain PXO99A).